A 346-amino-acid chain; its full sequence is Tyrosine--tRNA ligase (346 aa).

A 'HIGH' region motif is present at residues 47-56 (PSGRIHIAQA). A 'KMSKS' region motif is present at residues 230 to 234 (KMSKS). Residue Lys233 participates in ATP binding.

It belongs to the class-I aminoacyl-tRNA synthetase family. Homodimer.

The catalysed reaction is tRNA(Tyr) + L-tyrosine + ATP = L-tyrosyl-tRNA(Tyr) + AMP + diphosphate + H(+). Functionally, catalyzes the attachment of tyrosine to tRNA(Tyr) in a two-step reaction: tyrosine is first activated by ATP to form Tyr-AMP and then transferred to the acceptor end of tRNA(Tyr). In Acanthamoeba polyphaga (Amoeba), this protein is Tyrosine--tRNA ligase (YARS).